A 363-amino-acid chain; its full sequence is Replication factor C subunit 4 (363 aa).

An N-acetylmethionine modification is found at Met1. The segment at 1–36 (MQAFLKGTSISTKPPLTKDRGVAASAGSSGENKKAK) is disordered. Lys6 and Lys13 each carry N6-acetyllysine. ATP is bound at residue 78 to 85 (GPPGTGKT).

This sequence belongs to the activator 1 small subunits family. Subunit of the RFC complex, an heteropentameric complex consisting of a large subunit RFC1 and four small subunits RFC2, RFC3, RFC4 and RFC5; the RFC complex interacts with PCNA. Forms an heterotetrameric complex with RFC2, RFC3 and RFC5; this complex has ATPase activity but is not stimulated by PCNA. The heterotetramer of subunits RFC2, RFC3, RFC4 and RFC5 interacts with RAD17. Interacts with ATAD5. Interacts with CTF18. Interacts with CNTD1; this interaction facilitates crossover formation.

It localises to the nucleus. Its function is as follows. Subunit of the replication factor C (RFC) complex which acts during elongation of primed DNA templates by DNA polymerases delta and epsilon, and is necessary for ATP-dependent loading of proliferating cell nuclear antigen (PCNA) onto primed DNA. The RFC4 subunit probably functions as a scaffold on which the other complex components can assemble. In Homo sapiens (Human), this protein is Replication factor C subunit 4 (RFC4).